Here is a 159-residue protein sequence, read N- to C-terminus: MVRIRIRAIGKIKESFIRDAIADYAKRMCSFCQVECIEYPEAPVPDTHPSTIEMACVSEGEKLCSGIDSLDYVIILDRTGKQVSSEGLAEVIRRCEIEGPYQLVFIIGGPHGLSKDCLQKGNIILSLSAMTFPHQIARLLLYEQLYRAFTIIRGLPYHR.

Residues Leu-76, Gly-108, and 127 to 132 (LSAMTF) each bind S-adenosyl-L-methionine.

Belongs to the RNA methyltransferase RlmH family.

The protein resides in the cytoplasm. It carries out the reaction pseudouridine(1915) in 23S rRNA + S-adenosyl-L-methionine = N(3)-methylpseudouridine(1915) in 23S rRNA + S-adenosyl-L-homocysteine + H(+). Specifically methylates the pseudouridine at position 1915 (m3Psi1915) in 23S rRNA. This Methanospirillum hungatei JF-1 (strain ATCC 27890 / DSM 864 / NBRC 100397 / JF-1) protein is Putative ribosomal RNA large subunit methyltransferase H.